A 386-amino-acid polypeptide reads, in one-letter code: Alanine racemase (386 aa).

The active-site Proton acceptor; specific for D-alanine is the Lys48. Lys48 is modified (N6-(pyridoxal phosphate)lysine). Arg147 is a binding site for substrate. Tyr279 (proton acceptor; specific for L-alanine) is an active-site residue. Residue Met327 participates in substrate binding.

It belongs to the alanine racemase family. Pyridoxal 5'-phosphate is required as a cofactor.

It carries out the reaction L-alanine = D-alanine. It participates in amino-acid biosynthesis; D-alanine biosynthesis; D-alanine from L-alanine: step 1/1. Functionally, catalyzes the interconversion of L-alanine and D-alanine. May also act on other amino acids. This chain is Alanine racemase (alr), found in Prochlorococcus marinus (strain SARG / CCMP1375 / SS120).